The sequence spans 231 residues: DNA repair protein RecO (231 aa).

It belongs to the RecO family.

Involved in DNA repair and RecF pathway recombination. The protein is DNA repair protein RecO of Coxiella burnetii (strain CbuK_Q154) (Coxiella burnetii (strain Q154)).